A 429-amino-acid polypeptide reads, in one-letter code: Chaperone SurA (429 aa).

The N-terminal stretch at 1 to 18 is a signal peptide; the sequence is MFKRIALVCALFSGVCFA. PpiC domains lie at 170 to 271 and 281 to 380; these read NLTY…KLVA and ITQT…EVIA.

The protein localises to the periplasm. The catalysed reaction is [protein]-peptidylproline (omega=180) = [protein]-peptidylproline (omega=0). Its function is as follows. Chaperone involved in the correct folding and assembly of outer membrane proteins. Recognizes specific patterns of aromatic residues and the orientation of their side chains, which are found more frequently in integral outer membrane proteins. May act in both early periplasmic and late outer membrane-associated steps of protein maturation. The chain is Chaperone SurA from Legionella pneumophila (strain Lens).